We begin with the raw amino-acid sequence, 162 residues long: Phenazine biosynthesis protein PhzA1 (162 aa).

This sequence belongs to the PhzA/PhzB family.

The protein operates within antibiotic biosynthesis; phenazine biosynthesis. Its function is as follows. Involved in the biosynthesis of the antibiotic phenazine, a nitrogen-containing heterocyclic molecule. PhzA1 (operon phzA1B1C1E1F1G1) has a role in the biosynthesis of the phenazine during planktonic growth. This is Phenazine biosynthesis protein PhzA1 from Pseudomonas aeruginosa (strain ATCC 15692 / DSM 22644 / CIP 104116 / JCM 14847 / LMG 12228 / 1C / PRS 101 / PAO1).